The sequence spans 212 residues: Pyridoxine/pyridoxamine 5'-phosphate oxidase (212 aa).

Substrate is bound by residues 8-11 (RKNY) and Lys-66. Residues 61-66 (RIVLIK), 76-77 (FT), Arg-82, Lys-83, and Gln-105 contribute to the FMN site. Substrate contacts are provided by Tyr-123, Arg-127, and Ser-131. FMN-binding positions include 140 to 141 (QS) and Trp-184. Position 190-192 (190-192 (RLH)) interacts with substrate. An FMN-binding site is contributed by Arg-194.

Belongs to the pyridoxamine 5'-phosphate oxidase family. As to quaternary structure, homodimer. It depends on FMN as a cofactor.

The catalysed reaction is pyridoxamine 5'-phosphate + O2 + H2O = pyridoxal 5'-phosphate + H2O2 + NH4(+). It catalyses the reaction pyridoxine 5'-phosphate + O2 = pyridoxal 5'-phosphate + H2O2. It functions in the pathway cofactor metabolism; pyridoxal 5'-phosphate salvage; pyridoxal 5'-phosphate from pyridoxamine 5'-phosphate: step 1/1. The protein operates within cofactor metabolism; pyridoxal 5'-phosphate salvage; pyridoxal 5'-phosphate from pyridoxine 5'-phosphate: step 1/1. In terms of biological role, catalyzes the oxidation of either pyridoxine 5'-phosphate (PNP) or pyridoxamine 5'-phosphate (PMP) into pyridoxal 5'-phosphate (PLP). This is Pyridoxine/pyridoxamine 5'-phosphate oxidase from Paraburkholderia phymatum (strain DSM 17167 / CIP 108236 / LMG 21445 / STM815) (Burkholderia phymatum).